Reading from the N-terminus, the 291-residue chain is 33 kDa chaperonin (291 aa).

Intrachain disulfides connect Cys235–Cys237 and Cys268–Cys271.

The protein belongs to the HSP33 family. Under oxidizing conditions two disulfide bonds are formed involving the reactive cysteines. Under reducing conditions zinc is bound to the reactive cysteines and the protein is inactive.

The protein resides in the cytoplasm. In terms of biological role, redox regulated molecular chaperone. Protects both thermally unfolding and oxidatively damaged proteins from irreversible aggregation. Plays an important role in the bacterial defense system toward oxidative stress. This is 33 kDa chaperonin from Streptococcus agalactiae serotype Ia (strain ATCC 27591 / A909 / CDC SS700).